Reading from the N-terminus, the 923-residue chain is Tyrosine-protein kinase receptor torso (923 aa).

A signal peptide spans 1–20 (MLIFYAKYAFIFWFFVGSNQ). Residues 21 to 399 (GEMLLMDKIS…VLLSEGNMVK (379 aa)) are Extracellular-facing. N-linked (GlcNAc...) asparagine glycosylation is found at Asn37, Asn63, Asn107, Asn142, Asn146, Asn287, Asn298, Asn314, Asn326, Asn342, Asn348, and Asn377. Residues 400–420 (LVLFIIVPICCILMLCSLTFC) traverse the membrane as a helical segment. Residues 421-923 (RRNRSEVQAL…EEELYLEPLN (503 aa)) lie on the Cytoplasmic side of the membrane. A Protein kinase domain is found at 475–874 (VLLQDVLGEG…TFSALKHRLG (400 aa)). ATP contacts are provided by residues 481–489 (LGEGAFGLV) and Lys502. Position 608 is a phosphoserine (Ser608). Residues 656–687 (YIPKTAEAPKDRPKRKLKPQPKKDSKQDFKSD) form a disordered region. Residues 676 to 687 (PKKDSKQDFKSD) are compositionally biased toward basic and acidic residues. Asp741 serves as the catalytic Proton acceptor.

This sequence belongs to the protein kinase superfamily. Tyr protein kinase family. Mg(2+) is required as a cofactor. Post-translationally, may be auto-phosphorylated on tyrosine residues.

The protein localises to the membrane. The catalysed reaction is L-tyrosyl-[protein] + ATP = O-phospho-L-tyrosyl-[protein] + ADP + H(+). Probable receptor tyrosine kinase which is required for determination of anterior and posterior terminal structures in the embryo. During postembryonic development, involved in the initiation of metamorphosis probably by inducing the production of ecdysone in response to prothoracicotropic hormone Ptth. Binding to Ptth stimulates activation of canonical MAPK signaling leading to ERK phosphorylation. The polypeptide is Tyrosine-protein kinase receptor torso (tor) (Drosophila melanogaster (Fruit fly)).